Consider the following 299-residue polypeptide: CRISPR-associated endonuclease Cas1 3 (299 aa).

Residues Glu143, His210, and Asp223 each coordinate Mn(2+).

It belongs to the CRISPR-associated endonuclease Cas1 family. As to quaternary structure, homodimer, forms a heterotetramer with a Cas2 homodimer. Requires Mg(2+) as cofactor. The cofactor is Mn(2+).

In terms of biological role, CRISPR (clustered regularly interspaced short palindromic repeat), is an adaptive immune system that provides protection against mobile genetic elements (viruses, transposable elements and conjugative plasmids). CRISPR clusters contain spacers, sequences complementary to antecedent mobile elements, and target invading nucleic acids. CRISPR clusters are transcribed and processed into CRISPR RNA (crRNA). Acts as a dsDNA endonuclease. Involved in the integration of spacer DNA into the CRISPR cassette. The polypeptide is CRISPR-associated endonuclease Cas1 3 (Methanospirillum hungatei JF-1 (strain ATCC 27890 / DSM 864 / NBRC 100397 / JF-1)).